Here is a 129-residue protein sequence, read N- to C-terminus: Small ribosomal subunit protein uS8 (129 aa).

This sequence belongs to the universal ribosomal protein uS8 family. Part of the 30S ribosomal subunit.

Functionally, one of the primary rRNA binding proteins, it binds directly to 16S rRNA central domain where it helps coordinate assembly of the platform of the 30S subunit. The protein is Small ribosomal subunit protein uS8 of Thermoplasma acidophilum (strain ATCC 25905 / DSM 1728 / JCM 9062 / NBRC 15155 / AMRC-C165).